A 152-amino-acid chain; its full sequence is Deoxyuridine 5'-triphosphate nucleotidohydrolase (152 aa).

Residues 71 to 73, asparagine 84, 88 to 90, and methionine 98 each bind substrate; these read RSG and LID.

Belongs to the dUTPase family. It depends on Mg(2+) as a cofactor.

The enzyme catalyses dUTP + H2O = dUMP + diphosphate + H(+). Its pathway is pyrimidine metabolism; dUMP biosynthesis; dUMP from dCTP (dUTP route): step 2/2. Its function is as follows. This enzyme is involved in nucleotide metabolism: it produces dUMP, the immediate precursor of thymidine nucleotides and it decreases the intracellular concentration of dUTP so that uracil cannot be incorporated into DNA. This chain is Deoxyuridine 5'-triphosphate nucleotidohydrolase, found in Klebsiella pneumoniae (strain 342).